Here is a 219-residue protein sequence, read N- to C-terminus: uncharacterized protein (219 aa).

An ACT domain is found at 4-79; it reads GLRIIAENKI…YIIEIEEEES (76 aa).

This is an uncharacterized protein from Archaeoglobus fulgidus (strain ATCC 49558 / DSM 4304 / JCM 9628 / NBRC 100126 / VC-16).